We begin with the raw amino-acid sequence, 267 residues long: Dihydropteroate synthase (267 aa).

One can recognise a Pterin-binding domain in the interval 1–251; sequence MTKTKIMGIL…NVELNAKLAK (251 aa). N11 contacts Mg(2+). (7,8-dihydropterin-6-yl)methyl diphosphate is bound by residues T51, D84, N103, D167, K203, and 239–241; that span reads RVH.

The protein belongs to the DHPS family. Homodimer. Requires Mg(2+) as cofactor.

The enzyme catalyses (7,8-dihydropterin-6-yl)methyl diphosphate + 4-aminobenzoate = 7,8-dihydropteroate + diphosphate. Its pathway is cofactor biosynthesis; tetrahydrofolate biosynthesis; 7,8-dihydrofolate from 2-amino-4-hydroxy-6-hydroxymethyl-7,8-dihydropteridine diphosphate and 4-aminobenzoate: step 1/2. Functionally, catalyzes the condensation of para-aminobenzoate (pABA) with 6-hydroxymethyl-7,8-dihydropterin diphosphate (DHPt-PP) to form 7,8-dihydropteroate (H2Pte), the immediate precursor of folate derivatives. The protein is Dihydropteroate synthase (folP) of Staphylococcus aureus (strain MSSA476).